The following is a 289-amino-acid chain: Shikimate dehydrogenase (NADP(+)) (289 aa).

Shikimate is bound by residues 20-22 (SIS) and Ser67. The active-site Proton acceptor is the Lys71. Asn92 and Asp107 together coordinate shikimate. NADP(+)-binding positions include 132–136 (GGGGA) and Val230. Tyr232 contacts shikimate. Gly253 contacts NADP(+).

The protein belongs to the shikimate dehydrogenase family. In terms of assembly, homodimer.

It catalyses the reaction shikimate + NADP(+) = 3-dehydroshikimate + NADPH + H(+). The protein operates within metabolic intermediate biosynthesis; chorismate biosynthesis; chorismate from D-erythrose 4-phosphate and phosphoenolpyruvate: step 4/7. Its function is as follows. Involved in the biosynthesis of the chorismate, which leads to the biosynthesis of aromatic amino acids. Catalyzes the reversible NADPH linked reduction of 3-dehydroshikimate (DHSA) to yield shikimate (SA). The protein is Shikimate dehydrogenase (NADP(+)) of Streptococcus mutans serotype c (strain ATCC 700610 / UA159).